Reading from the N-terminus, the 343-residue chain is N-acetyl-gamma-glutamyl-phosphate reductase (343 aa).

Cys149 is a catalytic residue.

Belongs to the NAGSA dehydrogenase family. Type 1 subfamily.

The protein resides in the cytoplasm. The catalysed reaction is N-acetyl-L-glutamate 5-semialdehyde + phosphate + NADP(+) = N-acetyl-L-glutamyl 5-phosphate + NADPH + H(+). It participates in amino-acid biosynthesis; L-arginine biosynthesis; N(2)-acetyl-L-ornithine from L-glutamate: step 3/4. Catalyzes the NADPH-dependent reduction of N-acetyl-5-glutamyl phosphate to yield N-acetyl-L-glutamate 5-semialdehyde. The protein is N-acetyl-gamma-glutamyl-phosphate reductase of Methanococcus maripaludis (strain C7 / ATCC BAA-1331).